Consider the following 451-residue polypeptide: Bifunctional protein GlmU (451 aa).

A pyrophosphorylase region spans residues 1 to 231 (MDSPLAIIVL…ADEVAGINSR (231 aa)). UDP-N-acetyl-alpha-D-glucosamine is bound by residues 10–13 (LAAG), Lys24, Gln74, 79–80 (GT), 102–104 (YGD), Gly142, Glu156, Asn171, and Asn229. Asp104 contacts Mg(2+). Asn229 contacts Mg(2+). Residues 232–252 (GELAEAEGRWQQRRRAAAMAD) are linker. Residues 253 to 451 (GASLIAPETV…MKKKKAEKKS (199 aa)) are N-acetyltransferase. UDP-N-acetyl-alpha-D-glucosamine is bound by residues Arg318 and Lys336. His348 (proton acceptor) is an active-site residue. Residues Tyr351 and Asn362 each coordinate UDP-N-acetyl-alpha-D-glucosamine. Residues Ala365, 371 to 372 (NY), Ser390, Ala408, and Arg425 each bind acetyl-CoA.

It in the N-terminal section; belongs to the N-acetylglucosamine-1-phosphate uridyltransferase family. The protein in the C-terminal section; belongs to the transferase hexapeptide repeat family. Homotrimer. It depends on Mg(2+) as a cofactor.

It is found in the cytoplasm. It catalyses the reaction alpha-D-glucosamine 1-phosphate + acetyl-CoA = N-acetyl-alpha-D-glucosamine 1-phosphate + CoA + H(+). The enzyme catalyses N-acetyl-alpha-D-glucosamine 1-phosphate + UTP + H(+) = UDP-N-acetyl-alpha-D-glucosamine + diphosphate. It functions in the pathway nucleotide-sugar biosynthesis; UDP-N-acetyl-alpha-D-glucosamine biosynthesis; N-acetyl-alpha-D-glucosamine 1-phosphate from alpha-D-glucosamine 6-phosphate (route II): step 2/2. It participates in nucleotide-sugar biosynthesis; UDP-N-acetyl-alpha-D-glucosamine biosynthesis; UDP-N-acetyl-alpha-D-glucosamine from N-acetyl-alpha-D-glucosamine 1-phosphate: step 1/1. The protein operates within bacterial outer membrane biogenesis; LPS lipid A biosynthesis. Catalyzes the last two sequential reactions in the de novo biosynthetic pathway for UDP-N-acetylglucosamine (UDP-GlcNAc). The C-terminal domain catalyzes the transfer of acetyl group from acetyl coenzyme A to glucosamine-1-phosphate (GlcN-1-P) to produce N-acetylglucosamine-1-phosphate (GlcNAc-1-P), which is converted into UDP-GlcNAc by the transfer of uridine 5-monophosphate (from uridine 5-triphosphate), a reaction catalyzed by the N-terminal domain. In Novosphingobium aromaticivorans (strain ATCC 700278 / DSM 12444 / CCUG 56034 / CIP 105152 / NBRC 16084 / F199), this protein is Bifunctional protein GlmU.